Here is a 172-residue protein sequence, read N- to C-terminus: Adenine phosphoribosyltransferase (172 aa).

The protein belongs to the purine/pyrimidine phosphoribosyltransferase family. Homodimer.

It localises to the cytoplasm. The catalysed reaction is AMP + diphosphate = 5-phospho-alpha-D-ribose 1-diphosphate + adenine. Its pathway is purine metabolism; AMP biosynthesis via salvage pathway; AMP from adenine: step 1/1. Catalyzes a salvage reaction resulting in the formation of AMP, that is energically less costly than de novo synthesis. The polypeptide is Adenine phosphoribosyltransferase (Prochlorococcus marinus (strain MIT 9215)).